Consider the following 389-residue polypeptide: Succinyl-diaminopimelate desuccinylase (389 aa).

Residue histidine 75 participates in Zn(2+) binding. The active site involves aspartate 77. Zn(2+) is bound at residue aspartate 108. Catalysis depends on glutamate 142, which acts as the Proton acceptor. Residues glutamate 143, glutamate 171, and histidine 357 each contribute to the Zn(2+) site.

Belongs to the peptidase M20A family. DapE subfamily. In terms of assembly, homodimer. Zn(2+) serves as cofactor. Requires Co(2+) as cofactor.

It catalyses the reaction N-succinyl-(2S,6S)-2,6-diaminopimelate + H2O = (2S,6S)-2,6-diaminopimelate + succinate. It functions in the pathway amino-acid biosynthesis; L-lysine biosynthesis via DAP pathway; LL-2,6-diaminopimelate from (S)-tetrahydrodipicolinate (succinylase route): step 3/3. Functionally, catalyzes the hydrolysis of N-succinyl-L,L-diaminopimelic acid (SDAP), forming succinate and LL-2,6-diaminopimelate (DAP), an intermediate involved in the bacterial biosynthesis of lysine and meso-diaminopimelic acid, an essential component of bacterial cell walls. The protein is Succinyl-diaminopimelate desuccinylase of Paracidovorax citrulli (strain AAC00-1) (Acidovorax citrulli).